A 159-amino-acid chain; its full sequence is MIHYLKSFFLYEIVRGMALTLKYFFKPKVTINYPYEKSPISPRFKGEHALRRYENGEERCIACKLCEAICPAQAIVIEADEREDGSRRTTRYDIDMTKCIYCGLCQEACPVDAIVEGPNFEFASLTHTALIYDKERLLQNGDRWEQALASKLRKDYEYR.

4Fe-4S ferredoxin-type domains follow at residues 51-80 (RRYE…IEAD) and 90-119 (TRYD…EGPN). Positions 60, 63, 66, 70, 99, 102, 105, and 109 each coordinate [4Fe-4S] cluster.

This sequence belongs to the complex I 23 kDa subunit family. As to quaternary structure, NDH-1 is composed of 14 different subunits. Subunits NuoA, H, J, K, L, M, N constitute the membrane sector of the complex. It depends on [4Fe-4S] cluster as a cofactor.

It is found in the cell membrane. The enzyme catalyses a quinone + NADH + 5 H(+)(in) = a quinol + NAD(+) + 4 H(+)(out). Functionally, NDH-1 shuttles electrons from NADH, via FMN and iron-sulfur (Fe-S) centers, to quinones in the respiratory chain. The immediate electron acceptor for the enzyme in this species is believed to be ubiquinone. Couples the redox reaction to proton translocation (for every two electrons transferred, four hydrogen ions are translocated across the cytoplasmic membrane), and thus conserves the redox energy in a proton gradient. The chain is NADH-quinone oxidoreductase subunit I from Rickettsia africae (strain ESF-5).